The sequence spans 316 residues: Ribosomal RNA small subunit methyltransferase H (316 aa).

S-adenosyl-L-methionine contacts are provided by residues 35–37 (AGH), aspartate 55, phenylalanine 84, aspartate 105, and glutamine 112.

This sequence belongs to the methyltransferase superfamily. RsmH family.

The protein resides in the cytoplasm. It carries out the reaction cytidine(1402) in 16S rRNA + S-adenosyl-L-methionine = N(4)-methylcytidine(1402) in 16S rRNA + S-adenosyl-L-homocysteine + H(+). Its function is as follows. Specifically methylates the N4 position of cytidine in position 1402 (C1402) of 16S rRNA. This chain is Ribosomal RNA small subunit methyltransferase H, found in Streptococcus gordonii (strain Challis / ATCC 35105 / BCRC 15272 / CH1 / DL1 / V288).